The chain runs to 908 residues: Alanine--tRNA ligase (908 aa).

Zn(2+) is bound by residues H588, H592, C691, and H695.

It belongs to the class-II aminoacyl-tRNA synthetase family. Requires Zn(2+) as cofactor.

The protein localises to the cytoplasm. The enzyme catalyses tRNA(Ala) + L-alanine + ATP = L-alanyl-tRNA(Ala) + AMP + diphosphate. Catalyzes the attachment of alanine to tRNA(Ala) in a two-step reaction: alanine is first activated by ATP to form Ala-AMP and then transferred to the acceptor end of tRNA(Ala). Also edits incorrectly charged Ser-tRNA(Ala) and Gly-tRNA(Ala) via its editing domain. The sequence is that of Alanine--tRNA ligase from Mycobacterium leprae (strain TN).